We begin with the raw amino-acid sequence, 302 residues long: uncharacterized protein (302 aa).

Residues 1-52 (MLKKLKVVRLLVNHLIYCPSIFMPYSKNMKKKIWNKTSLGALFMLFGTALTA) form the signal peptide.

The protein belongs to the MG439/MG440 family.

This is an uncharacterized protein from Mycoplasma pneumoniae (strain ATCC 29342 / M129 / Subtype 1) (Mycoplasmoides pneumoniae).